The primary structure comprises 495 residues: Glycerol kinase (495 aa).

Thr-13 contributes to the ADP binding site. ATP contacts are provided by Thr-13, Thr-14, and Ser-15. Thr-13 is a sn-glycerol 3-phosphate binding site. Arg-17 is an ADP binding site. Sn-glycerol 3-phosphate-binding residues include Arg-83, Glu-84, Tyr-135, and Asp-244. Residues Arg-83, Glu-84, Tyr-135, Asp-244, and Gln-245 each contribute to the glycerol site. Residues Thr-266 and Gly-309 each coordinate ADP. ATP is bound by residues Thr-266, Gly-309, Gln-313, and Gly-410. Residues Gly-410 and Asn-414 each coordinate ADP.

Belongs to the FGGY kinase family.

It carries out the reaction glycerol + ATP = sn-glycerol 3-phosphate + ADP + H(+). It participates in polyol metabolism; glycerol degradation via glycerol kinase pathway; sn-glycerol 3-phosphate from glycerol: step 1/1. Its activity is regulated as follows. Inhibited by fructose 1,6-bisphosphate (FBP). Its function is as follows. Key enzyme in the regulation of glycerol uptake and metabolism. Catalyzes the phosphorylation of glycerol to yield sn-glycerol 3-phosphate. In Shewanella amazonensis (strain ATCC BAA-1098 / SB2B), this protein is Glycerol kinase.